The chain runs to 427 residues: GTPase Obg (427 aa).

The region spanning 1–158 (MFVDQVKIYV…RDVTLELKVL (158 aa)) is the Obg domain. One can recognise an OBG-type G domain in the interval 159-329 (ADVGLVGFPS…LLFEVANLLE (171 aa)). GTP-binding positions include 165 to 172 (GFPSVGKS), 190 to 194 (FTTIV), 212 to 215 (DLPG), 282 to 285 (NKMD), and 310 to 312 (SAV). Residues Ser-172 and Thr-192 each coordinate Mg(2+). In terms of domain architecture, OCT spans 349-427 (YKFESESNFE…ILEYQFEFID (79 aa)).

This sequence belongs to the TRAFAC class OBG-HflX-like GTPase superfamily. OBG GTPase family. As to quaternary structure, monomer. Requires Mg(2+) as cofactor.

The protein localises to the cytoplasm. Its function is as follows. An essential GTPase which binds GTP, GDP and possibly (p)ppGpp with moderate affinity, with high nucleotide exchange rates and a fairly low GTP hydrolysis rate. Plays a role in control of the cell cycle, stress response, ribosome biogenesis and in those bacteria that undergo differentiation, in morphogenesis control. In Bacillus mycoides (strain KBAB4) (Bacillus weihenstephanensis), this protein is GTPase Obg.